We begin with the raw amino-acid sequence, 434 residues long: Glutamine synthetase leaf isozyme, chloroplastic (434 aa).

Disordered stretches follow at residues 1-33 and 101-126; these read MQVR…ARQP and TISK…GQAP. A chloroplast-targeting transit peptide spans 1-54; that stretch reads MQVRRDDDGAGGCAGDAVPGGGEGQDGVPARQPAGRVWGVSRAARATSGFKVLA. Over residues 10–25 the composition is skewed to gly residues; sequence AGGCAGDAVPGGGEGQ. The GS beta-grasp domain maps to 81–161; sequence IIAEYIWVGG…VICDTYTPQG (81 aa). In terms of domain architecture, GS catalytic spans 168–434; the sequence is KRHMAAQIFS…LAAKKLALKV (267 aa).

The protein belongs to the glutamine synthetase family. Homooctamer.

It localises to the plastid. Its subcellular location is the chloroplast. The enzyme catalyses L-glutamate + NH4(+) + ATP = L-glutamine + ADP + phosphate + H(+). In terms of biological role, the light-modulated chloroplast enzyme, encoded by a nuclear gene and expressed primarily in leaves, is responsible for the reassimilation of the ammonia generated by photorespiration. This is Glutamine synthetase leaf isozyme, chloroplastic from Hordeum vulgare (Barley).